A 422-amino-acid chain; its full sequence is Histidine--tRNA ligase (422 aa).

The protein belongs to the class-II aminoacyl-tRNA synthetase family. Homodimer.

It localises to the cytoplasm. The enzyme catalyses tRNA(His) + L-histidine + ATP = L-histidyl-tRNA(His) + AMP + diphosphate + H(+). This Lysinibacillus sphaericus (strain C3-41) protein is Histidine--tRNA ligase.